The chain runs to 525 residues: GMP synthase [glutamine-hydrolyzing] (525 aa).

A Glutamine amidotransferase type-1 domain is found at 9–207; sequence KILILDFGSQ…IVDICGCDTL (199 aa). Residue C86 is the Nucleophile of the active site. Catalysis depends on residues H181 and E183. A GMPS ATP-PPase domain is found at 208–400; it reads WTPANIAQDA…LGLPYDMVYR (193 aa). 235–241 provides a ligand contact to ATP; that stretch reads SGGVDSS.

As to quaternary structure, homodimer.

It catalyses the reaction XMP + L-glutamine + ATP + H2O = GMP + L-glutamate + AMP + diphosphate + 2 H(+). The protein operates within purine metabolism; GMP biosynthesis; GMP from XMP (L-Gln route): step 1/1. In terms of biological role, catalyzes the synthesis of GMP from XMP. The sequence is that of GMP synthase [glutamine-hydrolyzing] from Marinomonas sp. (strain MWYL1).